Here is a 271-residue protein sequence, read N- to C-terminus: Thymidine kinase (271 aa).

ATP contacts are provided by residues G74–T81 and D152–Q155. E153 acts as the Proton acceptor in catalysis. Residue Y184 participates in substrate binding. Positions 209 and 212 each coordinate Zn(2+). Residue Y237 participates in substrate binding. C241 contacts Zn(2+).

The protein belongs to the thymidine kinase family.

The enzyme catalyses thymidine + ATP = dTMP + ADP + H(+). The protein is Thymidine kinase (TK) of Oryza sativa subsp. japonica (Rice).